The sequence spans 98 residues: Nuclear protein 2 (98 aa).

A compositionally biased stretch (low complexity) spans 1 to 11; sequence MEPAAPTVQPR. Disordered regions lie at residues 1 to 24 and 78 to 98; these read MEPA…PPVG and LNSQ…TRLT. Basic residues predominate over residues 81 to 98; the sequence is QRKRRQRQLQPRPRTRLT.

The protein belongs to the NUPR family.

The protein localises to the nucleus. Acts as a transcriptional repressor by inhibiting gene expression at the NUPR1 promoter in a p53/TP53-dependent manner in cancer cells. Involved in the G1 cell cycle arrest, and in a decrease in cell viability and cell proliferation. Plays a role as a negative regulator of the protumoral factor NUPR1. This chain is Nuclear protein 2, found in Bos taurus (Bovine).